Consider the following 281-residue polypeptide: Diaminopimelate epimerase (281 aa).

Asn13, Gln46, and Asn66 together coordinate substrate. The Proton donor role is filled by Cys75. Substrate contacts are provided by residues 76–77 (GN), Asn160, Asn193, and 211–212 (ER). Cys220 acts as the Proton acceptor in catalysis. Substrate is bound at residue 221–222 (GT).

Belongs to the diaminopimelate epimerase family. In terms of assembly, homodimer.

It localises to the cytoplasm. The enzyme catalyses (2S,6S)-2,6-diaminopimelate = meso-2,6-diaminopimelate. It participates in amino-acid biosynthesis; L-lysine biosynthesis via DAP pathway; DL-2,6-diaminopimelate from LL-2,6-diaminopimelate: step 1/1. Its function is as follows. Catalyzes the stereoinversion of LL-2,6-diaminopimelate (L,L-DAP) to meso-diaminopimelate (meso-DAP), a precursor of L-lysine and an essential component of the bacterial peptidoglycan. The polypeptide is Diaminopimelate epimerase (Acinetobacter baylyi (strain ATCC 33305 / BD413 / ADP1)).